A 1744-amino-acid polypeptide reads, in one-letter code: Myotubularin-related protein 5 (1744 aa).

Positions 14 to 150 (DTVAVIVLEE…IRFLTYELVE (137 aa)) constitute a uDENN domain. In terms of domain architecture, cDENN spans 165 to 304 (ELGFELIPIS…YYNSLHQRLR (140 aa)). In terms of domain architecture, dDENN spans 306–412 (VMFTTTSQED…LTRALPRRKH (107 aa)). In terms of domain architecture, GRAM spans 787-871 (KGNFDPVLAH…LYSMESFKKL (85 aa)). The region spanning 996–1447 (NAHIRYAVID…PQIHMWPFLA (452 aa)) is the Myotubularin phosphatase domain. Residues 1102–1116 (TGSMTGSQQTLHSKA) are compositionally biased toward polar residues. The tract at residues 1102–1123 (TGSMTGSQQTLHSKASSNEESS) is disordered. Residues 1540–1590 (IHELTPFTVGARPVQCCYCTNILTRWSKAVHCKKCRIHVHEGCVNRNITIG) form a Phorbol-ester/DAG-type zinc finger. The 101-residue stretch at 1643 to 1743 (PPLCTGYLSK…WKECIEQVIR (101 aa)) folds into the PH domain.

The protein belongs to the protein-tyrosine phosphatase family. Non-receptor class myotubularin subfamily.

Probably acts as an adapter for other myotubularin-like phosphatases. The protein is Myotubularin-related protein 5 of Caenorhabditis elegans.